The following is a 189-amino-acid chain: Peptidyl-tRNA hydrolase (189 aa).

Residue tyrosine 15 participates in tRNA binding. Histidine 20 (proton acceptor) is an active-site residue. Tyrosine 65, asparagine 67, and asparagine 113 together coordinate tRNA.

Belongs to the PTH family. Monomer.

It localises to the cytoplasm. It carries out the reaction an N-acyl-L-alpha-aminoacyl-tRNA + H2O = an N-acyl-L-amino acid + a tRNA + H(+). Functionally, hydrolyzes ribosome-free peptidyl-tRNAs (with 1 or more amino acids incorporated), which drop off the ribosome during protein synthesis, or as a result of ribosome stalling. Its function is as follows. Catalyzes the release of premature peptidyl moieties from peptidyl-tRNA molecules trapped in stalled 50S ribosomal subunits, and thus maintains levels of free tRNAs and 50S ribosomes. The chain is Peptidyl-tRNA hydrolase from Caldicellulosiruptor saccharolyticus (strain ATCC 43494 / DSM 8903 / Tp8T 6331).